The sequence spans 328 residues: Glucan endo-1,3-beta-glucosidase, basic isoform 3 (328 aa).

Residue Glu-85 is the Proton donor of the active site. The Nucleophile role is filled by Glu-230. Positions 306–328 (VSERVWDISAETNSTTSSLISEM) are cleaved as a propeptide — removed in mature form. Asn-318 carries an N-linked (GlcNAc...) asparagine glycan.

Belongs to the glycosyl hydrolase 17 family.

It localises to the vacuole. It carries out the reaction Hydrolysis of (1-&gt;3)-beta-D-glucosidic linkages in (1-&gt;3)-beta-D-glucans.. Its function is as follows. Is thought to be an important plant defense-related product against fungal pathogens. The protein is Glucan endo-1,3-beta-glucosidase, basic isoform 3 (GLUB3) of Solanum tuberosum (Potato).